A 156-amino-acid polypeptide reads, in one-letter code: Large ribosomal subunit protein uL22 (156 aa).

Belongs to the universal ribosomal protein uL22 family. As to quaternary structure, part of the 50S ribosomal subunit.

Functionally, this protein binds specifically to 23S rRNA. It makes multiple contacts with different domains of the 23S rRNA in the assembled 50S subunit and ribosome. In terms of biological role, the globular domain of the protein is located near the polypeptide exit tunnel on the outside of the subunit, while an extended beta-hairpin is found that lines the wall of the exit tunnel in the center of the 70S ribosome. In Sulfurisphaera tokodaii (strain DSM 16993 / JCM 10545 / NBRC 100140 / 7) (Sulfolobus tokodaii), this protein is Large ribosomal subunit protein uL22.